The sequence spans 364 residues: DNA polymerase IV (364 aa).

One can recognise a UmuC domain in the interval 14-198 (IIHIDMDAFF…LPIEKFHGVG (185 aa)). Mg(2+) contacts are provided by aspartate 18 and aspartate 116. Glutamate 117 is a catalytic residue.

Belongs to the DNA polymerase type-Y family. In terms of assembly, monomer. Mg(2+) is required as a cofactor.

The protein resides in the cytoplasm. The catalysed reaction is DNA(n) + a 2'-deoxyribonucleoside 5'-triphosphate = DNA(n+1) + diphosphate. Its function is as follows. Poorly processive, error-prone DNA polymerase involved in untargeted mutagenesis. Copies undamaged DNA at stalled replication forks, which arise in vivo from mismatched or misaligned primer ends. These misaligned primers can be extended by PolIV. Exhibits no 3'-5' exonuclease (proofreading) activity. May be involved in translesional synthesis, in conjunction with the beta clamp from PolIII. In Streptococcus pyogenes serotype M6 (strain ATCC BAA-946 / MGAS10394), this protein is DNA polymerase IV.